Reading from the N-terminus, the 215-residue chain is Vesicle-trafficking protein SEC22b (215 aa).

Topologically, residues 1-190 (MVLLTMIARV…RQDAKYLNMR (190 aa)) are cytoplasmic. The Longin domain maps to 6 to 119 (MIARVADGLP…YSFIEFDNYI (114 aa)). In terms of domain architecture, v-SNARE coiled-coil homology spans 134–194 (NLSSVNTELQ…KYLNMRSTYA (61 aa)). The helical transmembrane segment at 191 to 213 (STYAKLAAVAVFSVMLIVYIRFW) threads the bilayer. The Lumenal segment spans residues 214-215 (WL).

Belongs to the synaptobrevin family. Component of 2 distinct SNARE complexes.

The protein localises to the endoplasmic reticulum membrane. It is found in the endoplasmic reticulum-Golgi intermediate compartment membrane. It localises to the golgi apparatus. Its subcellular location is the cis-Golgi network membrane. The protein resides in the trans-Golgi network membrane. The protein localises to the melanosome. In terms of biological role, SNARE involved in targeting and fusion of ER-derived transport vesicles with the Golgi complex as well as Golgi-derived retrograde transport vesicles with the ER. This chain is Vesicle-trafficking protein SEC22b, found in Xenopus tropicalis (Western clawed frog).